The chain runs to 230 residues: Demethylmenaquinone methyltransferase (230 aa).

S-adenosyl-L-methionine is bound by residues T62, D80, 100–101 (DG), and S117.

The protein belongs to the class I-like SAM-binding methyltransferase superfamily. MenG/UbiE family.

It carries out the reaction a 2-demethylmenaquinol + S-adenosyl-L-methionine = a menaquinol + S-adenosyl-L-homocysteine + H(+). The protein operates within quinol/quinone metabolism; menaquinone biosynthesis; menaquinol from 1,4-dihydroxy-2-naphthoate: step 2/2. In terms of biological role, methyltransferase required for the conversion of demethylmenaquinol (DMKH2) to menaquinol (MKH2). The protein is Demethylmenaquinone methyltransferase of Corynebacterium urealyticum (strain ATCC 43042 / DSM 7109).